Here is a 170-residue protein sequence, read N- to C-terminus: MITAVYPGTFDPLTRGHEDLVRRAAALFDKVVVGIAHSRNKKPFFSIDERVEIAREVLGHYPNVEVRSFAGLLKDFVREQNGRVIVRGLRAVSDFEYEFQMAGMNRHLLPEVETMFMTPSDQYQFISGTIVREIAQLGGDVSKFVFPSVERWLQAKAKEYREQSWPAGKG.

Residue threonine 9 participates in substrate binding. ATP contacts are provided by residues 9–10 (TF) and histidine 17. Residues lysine 41, leucine 73, and arginine 87 each coordinate substrate. ATP contacts are provided by residues 88–90 (GLR), glutamate 98, and 123–129 (YQFISGT).

This sequence belongs to the bacterial CoaD family. As to quaternary structure, homohexamer. Mg(2+) serves as cofactor.

The protein localises to the cytoplasm. The enzyme catalyses (R)-4'-phosphopantetheine + ATP + H(+) = 3'-dephospho-CoA + diphosphate. It participates in cofactor biosynthesis; coenzyme A biosynthesis; CoA from (R)-pantothenate: step 4/5. Its function is as follows. Reversibly transfers an adenylyl group from ATP to 4'-phosphopantetheine, yielding dephospho-CoA (dPCoA) and pyrophosphate. In Bordetella petrii (strain ATCC BAA-461 / DSM 12804 / CCUG 43448), this protein is Phosphopantetheine adenylyltransferase.